A 266-amino-acid chain; its full sequence is Undecaprenyl-diphosphatase (266 aa).

The next 8 helical transmembrane spans lie at 4–24, 39–59, 88–108, 114–134, 147–167, 186–206, 214–234, and 246–266; these read ILRVIILGFVQGISEFLPISS, LPIVFDIYLHFATVLVVIIYY, LNLILLILIITFFTALIGIFI, LFTFKLVLFNFIVTSILLFLI, IFFSGLLIGIMQGIGAMPGIS, SLEISFLSLIPIVFGSLFLKY, IIFNIFEINLGAIFAFIFGLF, and SKLYYFSIYLVSVVSLVYFLV.

This sequence belongs to the UppP family.

It localises to the cell inner membrane. It carries out the reaction di-trans,octa-cis-undecaprenyl diphosphate + H2O = di-trans,octa-cis-undecaprenyl phosphate + phosphate + H(+). Functionally, catalyzes the dephosphorylation of undecaprenyl diphosphate (UPP). Confers resistance to bacitracin. The sequence is that of Undecaprenyl-diphosphatase from Borrelia recurrentis (strain A1).